A 111-amino-acid chain; its full sequence is uncharacterized protein (111 aa).

To B.subtilis XkdW.

This is an uncharacterized protein from Bacillus subtilis (strain 168).